Reading from the N-terminus, the 208-residue chain is Uracil phosphoribosyltransferase (208 aa).

Residues Arg-78, Arg-103, and 130-138 (DPMLATGGS) each bind 5-phospho-alpha-D-ribose 1-diphosphate. Uracil-binding positions include Ile-193 and 198–200 (GDA). Asp-199 is a 5-phospho-alpha-D-ribose 1-diphosphate binding site.

This sequence belongs to the UPRTase family. The cofactor is Mg(2+).

The catalysed reaction is UMP + diphosphate = 5-phospho-alpha-D-ribose 1-diphosphate + uracil. It participates in pyrimidine metabolism; UMP biosynthesis via salvage pathway; UMP from uracil: step 1/1. With respect to regulation, allosterically activated by GTP. Catalyzes the conversion of uracil and 5-phospho-alpha-D-ribose 1-diphosphate (PRPP) to UMP and diphosphate. This chain is Uracil phosphoribosyltransferase, found in Shewanella sp. (strain ANA-3).